The chain runs to 43 residues: Protein PsbN (43 aa).

The chain crosses the membrane as a helical span at residues Thr5–Phe27.

This sequence belongs to the PsbN family.

Its subcellular location is the plastid. It localises to the chloroplast thylakoid membrane. May play a role in photosystem I and II biogenesis. The chain is Protein PsbN from Pinus koraiensis (Korean pine).